Reading from the N-terminus, the 331-residue chain is Porphobilinogen deaminase (331 aa).

Cys248 carries the post-translational modification S-(dipyrrolylmethanemethyl)cysteine. Residues 307–331 are disordered; sequence QLLQAPKQTGEPHDPDRHDKGTGRP. Residues 316-331 are compositionally biased toward basic and acidic residues; it reads GEPHDPDRHDKGTGRP.

Belongs to the HMBS family. In terms of assembly, monomer. Requires dipyrromethane as cofactor.

The catalysed reaction is 4 porphobilinogen + H2O = hydroxymethylbilane + 4 NH4(+). It participates in porphyrin-containing compound metabolism; protoporphyrin-IX biosynthesis; coproporphyrinogen-III from 5-aminolevulinate: step 2/4. Tetrapolymerization of the monopyrrole PBG into the hydroxymethylbilane pre-uroporphyrinogen in several discrete steps. The sequence is that of Porphobilinogen deaminase from Acidothermus cellulolyticus (strain ATCC 43068 / DSM 8971 / 11B).